A 246-amino-acid chain; its full sequence is uncharacterized protein (246 aa).

Positions Glu120–Ser149 are disordered. Residues Thr130–Ser149 show a composition bias toward low complexity.

This is an uncharacterized protein from Caenorhabditis elegans.